An 85-amino-acid polypeptide reads, in one-letter code: uncharacterized protein (85 aa).

It localises to the mitochondrion. This is an uncharacterized protein from Paramecium tetraurelia.